Here is a 501-residue protein sequence, read N- to C-terminus: UPF0371 protein CD630_08980 (501 aa).

It belongs to the UPF0371 family.

This chain is UPF0371 protein CD630_08980, found in Clostridioides difficile (strain 630) (Peptoclostridium difficile).